The chain runs to 151 residues: Small ribosomal subunit protein uS15 (151 aa).

An N6-acetyllysine; alternate modification is found at lysine 27. Residue lysine 27 is modified to N6-succinyllysine; alternate. Lysine 27 participates in a covalent cross-link: Glycyl lysine isopeptide (Lys-Gly) (interchain with G-Cter in ubiquitin). Serine 30 is subject to Phosphoserine. N6-succinyllysine is present on lysine 34. Residue tyrosine 38 is modified to Phosphotyrosine. Residue lysine 43 forms a Glycyl lysine isopeptide (Lys-Gly) (interchain with G-Cter in SUMO2) linkage.

Belongs to the universal ribosomal protein uS15 family. Component of the small ribosomal subunit. Part of the small subunit (SSU) processome, composed of more than 70 proteins and the RNA chaperone small nucleolar RNA (snoRNA) U3. Ubiquitinated at Lys-27 by RNF14 and RNF25 in response to ribosome collisions (ribosome stalling).

The protein resides in the cytoplasm. It localises to the nucleus. Its subcellular location is the nucleolus. Its function is as follows. Component of the small ribosomal subunit. The ribosome is a large ribonucleoprotein complex responsible for the synthesis of proteins in the cell. Part of the small subunit (SSU) processome, first precursor of the small eukaryotic ribosomal subunit. During the assembly of the SSU processome in the nucleolus, many ribosome biogenesis factors, an RNA chaperone and ribosomal proteins associate with the nascent pre-rRNA and work in concert to generate RNA folding, modifications, rearrangements and cleavage as well as targeted degradation of pre-ribosomal RNA by the RNA exosome. The protein is Small ribosomal subunit protein uS15 (RPS13) of Cricetulus griseus (Chinese hamster).